A 498-amino-acid chain; its full sequence is NAC domain-containing protein 75 (498 aa).

The NAC domain maps to 48–215 (LPAGVKFDPT…ELVVSKIFYQ (168 aa)). Residues 166–221 (KGCKKILVLYTNFGKNRKPEKTNWVMHQYHLGTHEEEKEGELVVSKIFYQTQPRQC) mediate DNA binding. Disordered stretches follow at residues 225 to 278 (SSTS…PNRS), 338 to 374 (VMAE…QRHH), 423 to 443 (QQQL…GGRS), and 457 to 498 (STTH…DHHG). Residues 233-248 (IGGGGGEASSGGGGGE) are compositionally biased toward gly residues. The span at 256 to 266 (GTTSGGSCSSS) shows a compositional bias: low complexity. The span at 356 to 374 (HMAHDHHHHHHQQQQQRHH) shows a compositional bias: basic residues. Residues 466–475 (GSSSMGNQQE) show a composition bias toward polar residues.

In terms of tissue distribution, expressed in the vascular cylinder of roots. Expressed in the differentiation zone of the root stele.

The protein localises to the nucleus. Transcription activator involved in xylem formation. Promotes the expression of the secondary wall-associated transcription factor MYB46. Functions upstream of NAC030/VND7, a master switch of xylem vessel differentiation. Acts as a upstream regulator of NAC101/VND6 and LBD30/ASL19. The sequence is that of NAC domain-containing protein 75 from Arabidopsis thaliana (Mouse-ear cress).